Here is a 398-residue protein sequence, read N- to C-terminus: Succinate--CoA ligase [ADP-forming] subunit beta (398 aa).

The 229-residue stretch at 9 to 237 folds into the ATP-grasp domain; it reads RDLFETHGVP…AGGLDILELK (229 aa). Residues lysine 45, 52–54, alanine 94, and glutamate 99 each bind ATP; that span reads GRG. Residues asparagine 191 and aspartate 205 each coordinate Mg(2+). Residues asparagine 257 and 319–321 each bind substrate; that span reads GIT.

Belongs to the succinate/malate CoA ligase beta subunit family. In terms of assembly, heterotetramer of two alpha and two beta subunits. Mg(2+) is required as a cofactor.

The enzyme catalyses succinate + ATP + CoA = succinyl-CoA + ADP + phosphate. It carries out the reaction GTP + succinate + CoA = succinyl-CoA + GDP + phosphate. Its pathway is carbohydrate metabolism; tricarboxylic acid cycle; succinate from succinyl-CoA (ligase route): step 1/1. Succinyl-CoA synthetase functions in the citric acid cycle (TCA), coupling the hydrolysis of succinyl-CoA to the synthesis of either ATP or GTP and thus represents the only step of substrate-level phosphorylation in the TCA. The beta subunit provides nucleotide specificity of the enzyme and binds the substrate succinate, while the binding sites for coenzyme A and phosphate are found in the alpha subunit. The protein is Succinate--CoA ligase [ADP-forming] subunit beta of Corynebacterium glutamicum (strain ATCC 13032 / DSM 20300 / JCM 1318 / BCRC 11384 / CCUG 27702 / LMG 3730 / NBRC 12168 / NCIMB 10025 / NRRL B-2784 / 534).